The sequence spans 382 residues: Protein farnesyltransferase subunit beta (382 aa).

PFTB repeat units follow at residues 78–119, 129–170, 178–219, 226–268, and 286–328; these read CERA…CLCD, RDRL…SLVG, FEGT…ALLG, EIKL…VIVA, and PEKL…SSIA. (2E,6E)-farnesyl diphosphate contacts are provided by residues 204 to 207 and 247 to 250; these read HGGY and RSNK. Positions 253 and 255 each coordinate Zn(2+). 256 to 259 provides a ligand contact to (2E,6E)-farnesyl diphosphate; that stretch reads YSWW. H316 is a binding site for Zn(2+).

It belongs to the protein prenyltransferase subunit beta family. In terms of assembly, heterodimer of an alpha(cwp1) and a beta(cpp1) subunit. Requires Zn(2+) as cofactor.

It catalyses the reaction L-cysteinyl-[protein] + (2E,6E)-farnesyl diphosphate = S-(2E,6E)-farnesyl-L-cysteinyl-[protein] + diphosphate. Catalyzes the transfer of a farnesyl moiety from farnesyl diphosphate to a cysteine at the fourth position from the C-terminus of several proteins. The beta(cpp1) subunit is responsible for peptide-binding. This Schizosaccharomyces pombe (strain 972 / ATCC 24843) (Fission yeast) protein is Protein farnesyltransferase subunit beta (cpp1).